A 693-amino-acid chain; its full sequence is Heat shock protein homolog SSE1 (693 aa).

The residue at position 2 (serine 2) is an N-acetylserine. A Glycyl lysine isopeptide (Lys-Gly) (interchain with G-Cter in ubiquitin) cross-link involves residue lysine 195. Threonine 242 is subject to Phosphothreonine. Positions 653-693 (IRSKQEASQMAAMAEKLAAQRKAEAEKKEEKKDTEGDVDMD) are disordered. Residue serine 660 is modified to Phosphoserine. Basic and acidic residues predominate over residues 673–687 (RKAEAEKKEEKKDTE).

It belongs to the heat shock protein 70 family.

The protein localises to the cytoplasm. Has a calcium-dependent calmodulin-binding activity. Required for normal growth at various temperatures. This chain is Heat shock protein homolog SSE1 (SSE1), found in Saccharomyces cerevisiae (strain ATCC 204508 / S288c) (Baker's yeast).